The sequence spans 622 residues: Probable ATP-dependent RNA helicase DDX41 (622 aa).

A compositionally biased stretch (basic and acidic residues) spans Met1–Glu15. 2 disordered regions span residues Met1–Leu39 and Gln52–Asn84. A Phosphoserine modification is found at Ser4. The residue at position 9 (Lys9) is an N6-acetyllysine. Lys9 participates in a covalent cross-link: Glycyl lysine isopeptide (Lys-Gly) (interchain with G-Cter in ubiquitin). 2 positions are modified to phosphoserine: Ser21 and Ser23. Tyr33 carries the phosphotyrosine modification. Lys115 participates in a covalent cross-link: Glycyl lysine isopeptide (Lys-Gly) (interchain with G-Cter in ubiquitin). A Q motif motif is present at residues Lys181–Ile209. Residues Ile212 to Ile396 form the Helicase ATP-binding domain. Ala225–Thr232 contributes to the ATP binding site. The DEAD box motif lies at Asp344–Asp347. In terms of domain architecture, Helicase C-terminal spans Asp407–His567. Tyr414 is subject to Phosphotyrosine; by BTK. Residues Lys416 and Lys442 each participate in a glycyl lysine isopeptide (Lys-Gly) (interchain with G-Cter in SUMO2) cross-link. The CCHC-type zinc-finger motif lies at Arg580–Lys597.

Belongs to the DEAD box helicase family. DDX41 subfamily. As to quaternary structure, identified in the spliceosome C complex. Interacts with ERCC6. Interacts with FAM50A. Interacts with STING1. Interacts with CGAS. Interacts with several spliceosomes components such as PRP19 or CDC5L. Post-translationally, acetylation at Lys-9 regulates the nuclear/cytoplasmic localization. In terms of processing, phosphorylated by BTK; phosphorylation induces binding to dsDNA and STING1. 'Lys-48'-linked ubiquitinated and degraded by TRIM21 leading to negative regulation of the innate immune response to intracellular dsDNA.

The protein localises to the nucleus. It localises to the cytoplasm. It catalyses the reaction ATP + H2O = ADP + phosphate + H(+). In terms of biological role, multifunctional protein that participates in many aspects of cellular RNA metabolism. Plays pivotal roles in innate immune sensing and hematopoietic homeostasis. Recognizes foreign or self-nucleic acids generated during microbial infection, thereby initiating anti-pathogen responses. Mechanistically, phosphorylation by BTK allows binding to dsDNA leading to interaction with STING1. Modulates the homeostasis of dsDNA through its ATP-dependent DNA-unwinding activity and ATP-independent strand-annealing activity. In turn, induces STING1-mediated type I interferon and cytokine responses to DNA and DNA viruses. Selectively modulates the transcription of certain immunity-associated genes by regulating their alternative splicing. Binds to RNA (R)-loops, structures consisting of DNA/RNA hybrids and a displaced strand of DNA that occur during transcription, and prevents their accumulation, thereby maintaining genome stability. Also participates in pre-mRNA splicing, translational regulation and snoRNA processing, which is essential for ribosome biogenesis. The protein is Probable ATP-dependent RNA helicase DDX41 (DDX41) of Homo sapiens (Human).